Consider the following 425-residue polypeptide: L-cysteine:1D-myo-inositol 2-amino-2-deoxy-alpha-D-glucopyranoside ligase (425 aa).

Residue Cys43 coordinates Zn(2+). L-cysteinyl-5'-AMP-binding positions include 43-46 (CGIT), Thr58, and 81-83 (NVT). Positions 45-55 (ITPYDATHIGH) match the 'HIGH' region motif. Residues 195–200 (ERGGDP) carry the 'ERGGDP' region motif. An L-cysteinyl-5'-AMP-binding site is contributed by Trp236. Cys240 provides a ligand contact to Zn(2+). 258 to 260 (GSD) provides a ligand contact to L-cysteinyl-5'-AMP. Residue His265 coordinates Zn(2+). Position 295 (Val295) interacts with L-cysteinyl-5'-AMP. A 'KMSKS' region motif is present at residues 301–305 (KMSKS).

It belongs to the class-I aminoacyl-tRNA synthetase family. MshC subfamily. Monomer. The cofactor is Zn(2+).

It catalyses the reaction 1D-myo-inositol 2-amino-2-deoxy-alpha-D-glucopyranoside + L-cysteine + ATP = 1D-myo-inositol 2-(L-cysteinylamino)-2-deoxy-alpha-D-glucopyranoside + AMP + diphosphate + H(+). Functionally, catalyzes the ATP-dependent condensation of GlcN-Ins and L-cysteine to form L-Cys-GlcN-Ins. The chain is L-cysteine:1D-myo-inositol 2-amino-2-deoxy-alpha-D-glucopyranoside ligase from Sanguibacter keddieii (strain ATCC 51767 / DSM 10542 / NCFB 3025 / ST-74).